We begin with the raw amino-acid sequence, 182 residues long: MKVDKKFLKKVVKGMIKVLGNDEEKLSNTSKALDILSLLYKSNSNFRNIILSPTVSLEEKEKAVSKILDVLNLPQEVKPFIFLAVKENKGNIIKELNKAFRFEVEKFFATVQGEVITAHPIDEDLLNQIKTVLESKIGKKIEFTVKEDKSLIGGAVIKAGSYILDTSVRNYLKQLERSLTRF.

Belongs to the ATPase delta chain family. As to quaternary structure, F-type ATPases have 2 components, F(1) - the catalytic core - and F(0) - the membrane proton channel. F(1) has five subunits: alpha(3), beta(3), gamma(1), delta(1), epsilon(1). F(0) has three main subunits: a(1), b(2) and c(10-14). The alpha and beta chains form an alternating ring which encloses part of the gamma chain. F(1) is attached to F(0) by a central stalk formed by the gamma and epsilon chains, while a peripheral stalk is formed by the delta and b chains.

The protein localises to the cell inner membrane. Functionally, f(1)F(0) ATP synthase produces ATP from ADP in the presence of a proton or sodium gradient. F-type ATPases consist of two structural domains, F(1) containing the extramembraneous catalytic core and F(0) containing the membrane proton channel, linked together by a central stalk and a peripheral stalk. During catalysis, ATP synthesis in the catalytic domain of F(1) is coupled via a rotary mechanism of the central stalk subunits to proton translocation. This protein is part of the stalk that links CF(0) to CF(1). It either transmits conformational changes from CF(0) to CF(1) or is implicated in proton conduction. This chain is ATP synthase subunit delta, found in Sulfurihydrogenibium azorense (strain DSM 15241 / OCM 825 / Az-Fu1).